The following is a 533-amino-acid chain: Tyrosine ammonia-lyase (533 aa).

The active-site Proton donor/acceptor is Tyr-57. His-87 is a binding site for substrate. Positions 146 to 148 (ASG) form a cross-link, 5-imidazolinone (Ala-Gly). 2,3-didehydroalanine (Ser) is present on Ser-147. Substrate contacts are provided by Asn-200 and Arg-305.

The protein belongs to the TAL/TAM family. Homotetramer; dimer of dimers. Post-translationally, contains an active site 4-methylidene-imidazol-5-one (MIO), which is formed autocatalytically by cyclization and dehydration of residues Ala-Ser-Gly.

The catalysed reaction is L-tyrosine = (E)-4-coumarate + NH4(+). The enzyme catalyses L-tyrosine = 3-amino-3-(4-hydroxyphenyl)propanoate. In terms of biological role, has ammonia-lyase and, to a lesser extent, aminomutase activity. Catalyzes the rearrangement of L-tyrosine to R-beta-tyrosine and S-beta-tyrosine. Does not accept L-histidine or L-phenylalanine as substrates. The sequence is that of Tyrosine ammonia-lyase from Cupriavidus metallidurans (strain ATCC 43123 / DSM 2839 / NBRC 102507 / CH34) (Ralstonia metallidurans).